A 273-amino-acid polypeptide reads, in one-letter code: Glutamate 5-kinase (273 aa).

Residue Lys15 participates in ATP binding. Residues Ser55, Asp142, and Asn158 each contribute to the substrate site. ATP contacts are provided by residues 178–179 (SD) and 220–226 (TGGMLSK).

The protein belongs to the glutamate 5-kinase family.

The protein localises to the cytoplasm. It catalyses the reaction L-glutamate + ATP = L-glutamyl 5-phosphate + ADP. Its pathway is amino-acid biosynthesis; L-proline biosynthesis; L-glutamate 5-semialdehyde from L-glutamate: step 1/2. Catalyzes the transfer of a phosphate group to glutamate to form L-glutamate 5-phosphate. This is Glutamate 5-kinase from Streptococcus pyogenes serotype M4 (strain MGAS10750).